A 658-amino-acid chain; its full sequence is Protein teflon (658 aa).

The C2H2-type 1 zinc-finger motif lies at 33–56 (LYCHFCRDLFTQLPEFLRHLQGAH). 2 disordered regions span residues 78–127 (EQDD…SEQK) and 151–175 (HINN…SESN). Residues 100-111 (IPAKSEDSRAID) show a composition bias toward basic and acidic residues. Polar residues predominate over residues 118 to 127 (DNSPVKSEQK). Residues 608–630 (YFCKCCDDIFTLNEDYTRHLVSQ) form a C2H2-type 2; degenerate zinc finger. The C2H2-type 3 zinc finger occupies 634-657 (YQCTKCIKAFKYRGHFEKHLQNVH).

It belongs to the Teflon family.

It is found in the nucleus. The protein localises to the chromosome. In terms of biological role, specifically required in males for proper segregation of autosomal bivalents at meiosis I. Expression is required in the male germ line prior to spermatocyte stage S4. May have a role as a bridging molecule maintaining adhesion to hold autosome bivalents together via heterochromatic connections. This Drosophila erecta (Fruit fly) protein is Protein teflon.